The chain runs to 32 residues: Conotoxin Cltx-4 (32 aa).

Pro2, Pro24, Pro28, and Pro30 each carry 4-hydroxyproline. The residue at position 32 (Ser32) is a Serine amide.

Contains 4 disulfide bonds. As to expression, expressed by the venom duct.

It localises to the secreted. The chain is Conotoxin Cltx-4 from Californiconus californicus (California cone).